A 263-amino-acid polypeptide reads, in one-letter code: 3-deoxy-manno-octulosonate cytidylyltransferase 1 (263 aa).

This sequence belongs to the KdsB family.

The protein resides in the cytoplasm. It carries out the reaction 3-deoxy-alpha-D-manno-oct-2-ulosonate + CTP = CMP-3-deoxy-beta-D-manno-octulosonate + diphosphate. Its pathway is nucleotide-sugar biosynthesis; CMP-3-deoxy-D-manno-octulosonate biosynthesis; CMP-3-deoxy-D-manno-octulosonate from 3-deoxy-D-manno-octulosonate and CTP: step 1/1. It participates in bacterial outer membrane biogenesis; lipopolysaccharide biosynthesis. Functionally, activates KDO (a required 8-carbon sugar) for incorporation into bacterial lipopolysaccharide in Gram-negative bacteria. In Burkholderia ambifaria (strain ATCC BAA-244 / DSM 16087 / CCUG 44356 / LMG 19182 / AMMD) (Burkholderia cepacia (strain AMMD)), this protein is 3-deoxy-manno-octulosonate cytidylyltransferase 1.